Here is a 237-residue protein sequence, read N- to C-terminus: Phosphoribosylaminoimidazole-succinocarboxamide synthase (237 aa).

The protein belongs to the SAICAR synthetase family.

It carries out the reaction 5-amino-1-(5-phospho-D-ribosyl)imidazole-4-carboxylate + L-aspartate + ATP = (2S)-2-[5-amino-1-(5-phospho-beta-D-ribosyl)imidazole-4-carboxamido]succinate + ADP + phosphate + 2 H(+). It functions in the pathway purine metabolism; IMP biosynthesis via de novo pathway; 5-amino-1-(5-phospho-D-ribosyl)imidazole-4-carboxamide from 5-amino-1-(5-phospho-D-ribosyl)imidazole-4-carboxylate: step 1/2. The chain is Phosphoribosylaminoimidazole-succinocarboxamide synthase from Methanosarcina mazei (strain ATCC BAA-159 / DSM 3647 / Goe1 / Go1 / JCM 11833 / OCM 88) (Methanosarcina frisia).